Consider the following 602-residue polypeptide: ATP-dependent lipid A-core flippase (602 aa).

A run of 5 helical transmembrane segments spans residues Val-28 to Leu-48, Leu-84 to Leu-104, Ile-158 to Met-178, Trp-180 to Ala-200, and Pro-268 to Leu-288. One can recognise an ABC transmembrane type-1 domain in the interval Leu-32–Lys-323. The region spanning Leu-355–Met-591 is the ABC transporter domain. Gly-389–Ser-396 is a binding site for ATP.

This sequence belongs to the ABC transporter superfamily. Lipid exporter (TC 3.A.1.106) family. Homodimer.

The protein localises to the cell inner membrane. It catalyses the reaction ATP + H2O + lipid A-core oligosaccharideSide 1 = ADP + phosphate + lipid A-core oligosaccharideSide 2.. Its function is as follows. Involved in lipopolysaccharide (LPS) biosynthesis. Translocates lipid A-core from the inner to the outer leaflet of the inner membrane. Transmembrane domains (TMD) form a pore in the inner membrane and the ATP-binding domain (NBD) is responsible for energy generation. This is ATP-dependent lipid A-core flippase from Pseudomonas putida (strain ATCC 47054 / DSM 6125 / CFBP 8728 / NCIMB 11950 / KT2440).